We begin with the raw amino-acid sequence, 385 residues long: Chorismate synthase (385 aa).

2 residues coordinate NADP(+): Arg-40 and Arg-46. Residues 128 to 130 (RAS), 248 to 249 (QA), Gly-293, 308 to 312 (KAIPS), and Arg-334 each bind FMN.

The protein belongs to the chorismate synthase family. In terms of assembly, homotetramer. FMNH2 is required as a cofactor.

The catalysed reaction is 5-O-(1-carboxyvinyl)-3-phosphoshikimate = chorismate + phosphate. It functions in the pathway metabolic intermediate biosynthesis; chorismate biosynthesis; chorismate from D-erythrose 4-phosphate and phosphoenolpyruvate: step 7/7. In terms of biological role, catalyzes the anti-1,4-elimination of the C-3 phosphate and the C-6 proR hydrogen from 5-enolpyruvylshikimate-3-phosphate (EPSP) to yield chorismate, which is the branch point compound that serves as the starting substrate for the three terminal pathways of aromatic amino acid biosynthesis. This reaction introduces a second double bond into the aromatic ring system. In Endomicrobium trichonymphae, this protein is Chorismate synthase.